Reading from the N-terminus, the 419-residue chain is 2-amino-3-ketobutyrate coenzyme A ligase, mitochondrial (419 aa).

A mitochondrion-targeting transit peptide spans 1–21 (MWAGRVLHAALSRAPRESRAQ). Residue Lys-45 is modified to N6-acetyllysine; alternate. Lys-45 is modified (N6-succinyllysine; alternate). Position 134–135 (134–135 (CF)) interacts with pyridoxal 5'-phosphate. Residue His-159 coordinates substrate. Residue Lys-187 is modified to N6-acetyllysine; alternate. Lys-187 carries the post-translational modification N6-succinyllysine; alternate. Residues Ser-206, 231–234 (DESH), 262–265 (TLGK), and 295–296 (SN) each bind pyridoxal 5'-phosphate. N6-(pyridoxal phosphate)lysine is present on Lys-265. Lys-326 and Lys-368 each carry N6-succinyllysine. Lys-383 carries the post-translational modification N6-acetyllysine; alternate. Position 383 is an N6-succinyllysine; alternate (Lys-383). Arg-389 contributes to the substrate binding site.

It belongs to the class-II pyridoxal-phosphate-dependent aminotransferase family. The cofactor is pyridoxal 5'-phosphate.

The protein localises to the mitochondrion. Its subcellular location is the nucleus. It carries out the reaction glycine + acetyl-CoA = (2S)-2-amino-3-oxobutanoate + CoA. Its pathway is amino-acid degradation; L-threonine degradation via oxydo-reductase pathway; glycine from L-threonine: step 2/2. Pyridoxal phosphate (PLP) dependent enzyme, which catalyzes the cleavage of 2-amino-3-oxobutanoate to glycine and acetyl-CoA. Catalyzes the second reaction step on the main metabolic degradation pathway for L-threonine. This Bos taurus (Bovine) protein is 2-amino-3-ketobutyrate coenzyme A ligase, mitochondrial (GCAT).